A 329-amino-acid polypeptide reads, in one-letter code: Replication factor C small subunit 1 (329 aa).

44-51 contacts ATP; sequence GPPGTGKT.

This sequence belongs to the activator 1 small subunits family. RfcS subfamily. Heteromultimer composed of small subunits (RfcS) and large subunits (RfcL).

Its function is as follows. Part of the RFC clamp loader complex which loads the PCNA sliding clamp onto DNA. The protein is Replication factor C small subunit 1 of Pyrobaculum arsenaticum (strain DSM 13514 / JCM 11321 / PZ6).